We begin with the raw amino-acid sequence, 354 residues long: MSIEVRGLSKRFGAFRALDEVSLHIETGELVALLGPSGCGKTTLLRIIAGLESADAGSVLFAGEDATEVDVRQRQVGFVFQHYALFKHMTVFENVAFGLRVRHRSQRPSEARIRAKVLDLLGLVQLDWLADRYPAQLSGGQRQRIALARALAVEPRVLLLDEPFGALDAKVRKELRRWLRRLHDELHVASVFVTHDQEEALEVADRVVLMNAGRIEQVGSPREVWERPATPFVYGFLGDVNQLHGHATRGVWRLGEVALPAPDLPEADNQRAIAYVRPHDIDLARAGTAAPGIPVRLNHVYLAGPSAYLELARQDDQAIIEAQVPEPLFRSLGLKEGEALLAQPRRARVFAVQP.

One can recognise an ABC transporter domain in the interval 3–237 (IEVRGLSKRF…PATPFVYGFL (235 aa)). 35–42 (GPSGCGKT) is a binding site for ATP.

This sequence belongs to the ABC transporter superfamily. Sulfate/tungstate importer (TC 3.A.1.6) family. The complex is composed of two ATP-binding proteins (CysA), two transmembrane proteins (CysT and CysW) and a solute-binding protein (CysP).

Its subcellular location is the cell inner membrane. It carries out the reaction sulfate(out) + ATP + H2O = sulfate(in) + ADP + phosphate + H(+). The enzyme catalyses thiosulfate(out) + ATP + H2O = thiosulfate(in) + ADP + phosphate + H(+). Functionally, part of the ABC transporter complex CysAWTP involved in sulfate/thiosulfate import. Responsible for energy coupling to the transport system. The protein is Sulfate/thiosulfate import ATP-binding protein CysA of Bordetella parapertussis (strain 12822 / ATCC BAA-587 / NCTC 13253).